The primary structure comprises 349 residues: sn-glycerol-3-phosphate import ATP-binding protein UgpC (349 aa).

An ABC transporter domain is found at 4–234 (ISLRDVRKSY…PATTFVAGFI (231 aa)). 36–43 (GPSGCGKS) is an ATP binding site.

The protein belongs to the ABC transporter superfamily. sn-glycerol-3-phosphate importer (TC 3.A.1.1.3) family. The complex is composed of two ATP-binding proteins (UgpC), two transmembrane proteins (UgpA and UgpE) and a solute-binding protein (UgpB).

Its subcellular location is the cell inner membrane. It catalyses the reaction sn-glycerol 3-phosphate(out) + ATP + H2O = sn-glycerol 3-phosphate(in) + ADP + phosphate + H(+). Its function is as follows. Part of the ABC transporter complex UgpBAEC involved in sn-glycerol-3-phosphate (G3P) import. Responsible for energy coupling to the transport system. In Cereibacter sphaeroides (strain ATCC 17023 / DSM 158 / JCM 6121 / CCUG 31486 / LMG 2827 / NBRC 12203 / NCIMB 8253 / ATH 2.4.1.) (Rhodobacter sphaeroides), this protein is sn-glycerol-3-phosphate import ATP-binding protein UgpC.